The following is a 256-amino-acid chain: 5-keto-4-deoxy-D-glucarate aldolase (256 aa).

The active-site Proton acceptor is His-50. Residue Gln-151 coordinates substrate. Glu-153 provides a ligand contact to Mg(2+). The substrate site is built by Ser-178 and Asp-179. Asp-179 is a binding site for Mg(2+).

This sequence belongs to the HpcH/HpaI aldolase family. KDGluc aldolase subfamily. Homohexamer; trimer of dimers. The cofactor is Mg(2+).

It carries out the reaction 5-dehydro-4-deoxy-D-glucarate = 2-hydroxy-3-oxopropanoate + pyruvate. The enzyme catalyses 2-dehydro-3-deoxy-D-glucarate = 2-hydroxy-3-oxopropanoate + pyruvate. Its pathway is carbohydrate acid metabolism; galactarate degradation; D-glycerate from galactarate: step 2/3. Catalyzes the reversible retro-aldol cleavage of both 5-keto-4-deoxy-D-glucarate and 2-keto-3-deoxy-D-glucarate to pyruvate and tartronic semialdehyde. In Escherichia coli O6:H1 (strain CFT073 / ATCC 700928 / UPEC), this protein is 5-keto-4-deoxy-D-glucarate aldolase.